The primary structure comprises 267 residues: 4-hydroxy-tetrahydrodipicolinate reductase (267 aa).

Glycine 10–methionine 15 serves as a coordination point for NAD(+). Arginine 38 is an NADP(+) binding site. NAD(+) contacts are provided by residues glycine 100–threonine 102 and alanine 126–phenylalanine 129. The active-site Proton donor/acceptor is the histidine 156. Histidine 157 contacts (S)-2,3,4,5-tetrahydrodipicolinate. Catalysis depends on lysine 160, which acts as the Proton donor. (S)-2,3,4,5-tetrahydrodipicolinate is bound at residue glycine 166–threonine 167.

Belongs to the DapB family.

Its subcellular location is the cytoplasm. The catalysed reaction is (S)-2,3,4,5-tetrahydrodipicolinate + NAD(+) + H2O = (2S,4S)-4-hydroxy-2,3,4,5-tetrahydrodipicolinate + NADH + H(+). It catalyses the reaction (S)-2,3,4,5-tetrahydrodipicolinate + NADP(+) + H2O = (2S,4S)-4-hydroxy-2,3,4,5-tetrahydrodipicolinate + NADPH + H(+). It functions in the pathway amino-acid biosynthesis; L-lysine biosynthesis via DAP pathway; (S)-tetrahydrodipicolinate from L-aspartate: step 4/4. Catalyzes the conversion of 4-hydroxy-tetrahydrodipicolinate (HTPA) to tetrahydrodipicolinate. In Desulfitobacterium hafniense (strain DSM 10664 / DCB-2), this protein is 4-hydroxy-tetrahydrodipicolinate reductase.